We begin with the raw amino-acid sequence, 82 residues long: Small ribosomal subunit protein bS18 (82 aa).

The interval 1–20 (MVDINQIPTRRPFHRRRKTC) is disordered.

This sequence belongs to the bacterial ribosomal protein bS18 family. Part of the 30S ribosomal subunit. Forms a tight heterodimer with protein bS6.

Its function is as follows. Binds as a heterodimer with protein bS6 to the central domain of the 16S rRNA, where it helps stabilize the platform of the 30S subunit. The protein is Small ribosomal subunit protein bS18 of Chelativorans sp. (strain BNC1).